Reading from the N-terminus, the 257-residue chain is 5-oxoprolinase subunit A (257 aa).

The protein belongs to the LamB/PxpA family. As to quaternary structure, forms a complex composed of PxpA, PxpB and PxpC.

It carries out the reaction 5-oxo-L-proline + ATP + 2 H2O = L-glutamate + ADP + phosphate + H(+). Its function is as follows. Catalyzes the cleavage of 5-oxoproline to form L-glutamate coupled to the hydrolysis of ATP to ADP and inorganic phosphate. This is 5-oxoprolinase subunit A from Natranaerobius thermophilus (strain ATCC BAA-1301 / DSM 18059 / JW/NM-WN-LF).